The primary structure comprises 193 residues: Anthranilate synthase component 2 (193 aa).

In terms of domain architecture, Glutamine amidotransferase type-1 spans 3 to 193; sequence NILFLDNFDS…QQSIEWLLNR (191 aa). 57 to 59 provides a ligand contact to L-glutamine; sequence GPG. The active-site Nucleophile; for GATase activity is Cys-84. L-glutamine contacts are provided by residues Gln-88 and 134-135; that span reads SL. Catalysis depends on for GATase activity residues His-170 and Glu-172.

In terms of assembly, heterotetramer consisting of two non-identical subunits: a beta subunit (TrpG) and a large alpha subunit (TrpE).

The catalysed reaction is chorismate + L-glutamine = anthranilate + pyruvate + L-glutamate + H(+). The protein operates within amino-acid biosynthesis; L-tryptophan biosynthesis; L-tryptophan from chorismate: step 1/5. Part of a heterotetrameric complex that catalyzes the two-step biosynthesis of anthranilate, an intermediate in the biosynthesis of L-tryptophan. In the first step, the glutamine-binding beta subunit (TrpG) of anthranilate synthase (AS) provides the glutamine amidotransferase activity which generates ammonia as a substrate that, along with chorismate, is used in the second step, catalyzed by the large alpha subunit of AS (TrpE) to produce anthranilate. In the absence of TrpG, TrpE can synthesize anthranilate directly from chorismate and high concentrations of ammonia. The polypeptide is Anthranilate synthase component 2 (trpG) (Haemophilus influenzae (strain ATCC 51907 / DSM 11121 / KW20 / Rd)).